Consider the following 1194-residue polypeptide: UPF0507 protein PICST_55861 (1194 aa).

Residues 324–475 (QSYDPEAVKF…LSSSLSDELS (152 aa)) form the VPS9 domain.

The protein belongs to the UPF0507 family.

This chain is UPF0507 protein PICST_55861, found in Scheffersomyces stipitis (strain ATCC 58785 / CBS 6054 / NBRC 10063 / NRRL Y-11545) (Yeast).